Reading from the N-terminus, the 220-residue chain is Peptidyl-tRNA hydrolase (220 aa).

Position 14 (Tyr-14) interacts with tRNA. Catalysis depends on His-19, which acts as the Proton acceptor. Phe-60, Asn-62, and Asn-106 together coordinate tRNA.

It belongs to the PTH family. In terms of assembly, monomer.

The protein localises to the cytoplasm. The catalysed reaction is an N-acyl-L-alpha-aminoacyl-tRNA + H2O = an N-acyl-L-amino acid + a tRNA + H(+). In terms of biological role, hydrolyzes ribosome-free peptidyl-tRNAs (with 1 or more amino acids incorporated), which drop off the ribosome during protein synthesis, or as a result of ribosome stalling. Its function is as follows. Catalyzes the release of premature peptidyl moieties from peptidyl-tRNA molecules trapped in stalled 50S ribosomal subunits, and thus maintains levels of free tRNAs and 50S ribosomes. In Campylobacter hominis (strain ATCC BAA-381 / DSM 21671 / CCUG 45161 / LMG 19568 / NCTC 13146 / CH001A), this protein is Peptidyl-tRNA hydrolase.